A 237-amino-acid polypeptide reads, in one-letter code: Probable transcriptional regulatory protein Mfl546 (237 aa).

The disordered stretch occupies residues 1-20 (MGRAHEVRAASMAKTAAKKS). A compositionally biased stretch (low complexity) spans 9–20 (AASMAKTAAKKS).

The protein belongs to the TACO1 family.

It is found in the cytoplasm. The chain is Probable transcriptional regulatory protein Mfl546 from Mesoplasma florum (strain ATCC 33453 / NBRC 100688 / NCTC 11704 / L1) (Acholeplasma florum).